A 715-amino-acid chain; its full sequence is Lactococcin-A transport/processing ATP-binding protein LcnC (715 aa).

The region spanning 11–138 (QVDEMDCGCA…SEWTGISLFL (128 aa)) is the Peptidase C39 domain. Residue Cys-17 is part of the active site. The next 6 membrane-spanning stretches (helical) occupy residues 167 to 187 (VILN…LGSY), 197 to 217 (IPNA…LTYI), 237 to 257 (LAID…MSFF), 282 to 302 (TILS…ILGL), 307 to 327 (LFLL…IFTP), and 396 to 416 (AIIQ…LVIS). In terms of domain architecture, ABC transmembrane type-1 spans 168–450 (ILNIVIASFI…IINLQTKLQK (283 aa)). Residues 482–715 (LNMSDISYQY…NGFYEQLYHN (234 aa)) form the ABC transporter domain. 515–522 (GMSGSGKS) serves as a coordination point for ATP.

Belongs to the ABC transporter superfamily. Bacteriocin (lactococcin) exporter (TC 3.A.1.112.3) family.

Its subcellular location is the cell membrane. Its function is as follows. Involved in the export process of the bacteriocin lactococcin A. This is Lactococcin-A transport/processing ATP-binding protein LcnC (lcnC) from Lactococcus lactis subsp. lactis (Streptococcus lactis).